Reading from the N-terminus, the 553-residue chain is NADH-quinone oxidoreductase subunit M (553 aa).

3 helical membrane-spanning segments follow: residues Val4–Leu24, Trp34–Phe54, and Ile84–Trp104. Residues Leu113–Glu135 form a disordered region. The next 10 membrane-spanning stretches (helical) occupy residues Val140–Ala160, Leu164–Phe184, Phe197–Val217, Ala246–Trp266, Pro316–Gln336, Leu342–Thr362, Leu371–Ile391, Ala420–Leu440, Trp447–Leu467, and Ile492–Leu512. Positions Gly527 to Pro553 are disordered. Low complexity predominate over residues Pro531–Ala544.

The protein belongs to the complex I subunit 4 family.

The protein resides in the cell membrane. The catalysed reaction is a quinone + NADH + 5 H(+)(in) = a quinol + NAD(+) + 4 H(+)(out). Functionally, NDH-1 shuttles electrons from NADH, via FMN and iron-sulfur (Fe-S) centers, to quinones in the respiratory chain. The immediate electron acceptor for the enzyme in this species is believed to be menaquinone. Couples the redox reaction to proton translocation (for every two electrons transferred, four hydrogen ions are translocated across the cytoplasmic membrane), and thus conserves the redox energy in a proton gradient. This is NADH-quinone oxidoreductase subunit M (nuoM) from Mycobacterium tuberculosis (strain CDC 1551 / Oshkosh).